We begin with the raw amino-acid sequence, 75 residues long: Caerin-1.1 (75 aa).

Positions 1–22 are cleaved as a signal peptide; sequence MASLKKSLFLVLLLGFVSVSIC. Positions 23 to 49 are excised as a propeptide; it reads EEEKRQEDEDEHEEEGESQEEGSEEKR. Residues 24–49 form a disordered region; that stretch reads EEKRQEDEDEHEEEGESQEEGSEEKR. Residues 30 to 45 are compositionally biased toward acidic residues; that stretch reads DEDEHEEEGESQEEGS. Leucine amide is present on leucine 74.

Belongs to the frog skin active peptide (FSAP) family. Caerin subfamily. The major product is Caerin-1.1; in addition, different peptides are produced that are missing some amino acid residues at the N-terminus or C-terminus. Caerin-1.1.1 and Caerin-1.1.4 are inactive. Expressed by the skin parotoid and/or rostral glands.

The protein resides in the secreted. Antimicrobial peptide with antibacterial and antiviral activities. Adopts an alpha helical conformation which can disrupt bacterial membranes. Inhibits the formation of NO by neuronal nitric oxide synthase (nNOS) at micromolar concentrations. Acts by a non-competitive mechanism, probably by binding to calcium/calmodulin and as a consequence blocking calmodulin attachment to nNOS. In terms of biological role, is inactive. This Ranoidea caerulea (Green tree frog) protein is Caerin-1.1.